Reading from the N-terminus, the 676-residue chain is Cysteine-rich receptor-like protein kinase 8 (676 aa).

The signal sequence occupies residues 1–34; sequence MYIVSMFGLAGLEALICFIFLFLFSFLTSFKASA. Residues 35–291 lie on the Extracellular side of the membrane; that stretch reads QNPFYLNHDC…IPGKSGNSTV (257 aa). 2 Gnk2-homologous domains span residues 38-142 and 151-255; these read FYLN…HKNF and ELIM…LYAF. N-linked (GlcNAc...) asparagine glycans are attached at residues Asn-46, Asn-53, Asn-71, Asn-114, Asn-159, Asn-187, Asn-257, and Asn-288. A helical membrane pass occupies residues 292 to 312; the sequence is LVVAIVVLAVLLFIALVGYCF. The Cytoplasmic segment spans residues 313 to 676; that stretch reads LAQRTKKTFD…DELITDLYPR (364 aa). In terms of domain architecture, Protein kinase spans 353–639; the sequence is FAESNKIGRG…TLPVPRQPGF (287 aa). ATP is bound by residues 359 to 367 and Lys-381; that span reads IGRGGFGEV. Tyr-426 is modified (phosphotyrosine). Residue Asp-478 is the Proton acceptor of the active site. Ser-482 is modified (phosphoserine). Thr-518 is subject to Phosphothreonine. The residue at position 526 (Tyr-526) is a Phosphotyrosine. The segment at 640–666 is disordered; sequence FIQSSPVKDPTDSDQSTTTKSTPASID. Positions 652–662 are enriched in low complexity; sequence SDQSTTTKSTP.

The protein belongs to the protein kinase superfamily. Ser/Thr protein kinase family. CRK subfamily.

The protein localises to the membrane. The catalysed reaction is L-seryl-[protein] + ATP = O-phospho-L-seryl-[protein] + ADP + H(+). It carries out the reaction L-threonyl-[protein] + ATP = O-phospho-L-threonyl-[protein] + ADP + H(+). The sequence is that of Cysteine-rich receptor-like protein kinase 8 (CRK8) from Arabidopsis thaliana (Mouse-ear cress).